Here is a 632-residue protein sequence, read N- to C-terminus: Serine/threonine-protein kinase plk-2 (632 aa).

Positions 1-26 (MQRVQPSAARVKSQKKEKAPPDVPDV) are disordered. In terms of domain architecture, Protein kinase spans 36 to 287 (YEKGKFLGKG…ARAVCRDHFF (252 aa)). ATP contacts are provided by residues 42–50 (LGKGGFAHC) and Lys65. Asp159 (proton acceptor) is an active-site residue. The interval 313-334 (AEENVSPSGTIDQRGPHQAGRS) is disordered. 2 POLO box domains span residues 405–484 (WISK…YMND) and 506–588 (TLRV…RLVE).

The protein belongs to the protein kinase superfamily. Ser/Thr protein kinase family. CDC5/Polo subfamily. In terms of assembly, interacts (via POLO box domain) with mex-5 and mex-6. Interacts (via POLO box domain) with him-8 (via N-terminus); the interaction mediates plk-2 recruitment to the pairing region of X chromosomes during meiosis. Interacts with sun-1. May interact with nicotinic acetylcholine receptor. Mg(2+) is required as a cofactor. As to expression, expressed in oocytes.

Its subcellular location is the nucleus. The protein localises to the cytoplasm. It is found in the cytoskeleton. The protein resides in the microtubule organizing center. It localises to the centrosome. Its subcellular location is the chromosome. The protein localises to the centromere. It is found in the kinetochore. It carries out the reaction L-seryl-[protein] + ATP = O-phospho-L-seryl-[protein] + ADP + H(+). The catalysed reaction is L-threonyl-[protein] + ATP = O-phospho-L-threonyl-[protein] + ADP + H(+). Functionally, serine/threonine-protein kinase which plays a role, during oogenesis, in chromosome pairing and synapsis, by facilitating the recruitment and attachment of meiotic chromosomes to the nuclear envelope during prophase. Promotes the localization of brc-1 to the short arm of homologous chromosomes during meiotic prophase I. Regulates the formation of sun-1 patches along the nuclear envelope. Promotes meiotic nuclei apoptosis in response to chromosomal asynapsis. Plays a redundant role with plk-1 in the establishment of cell polarity downstream of mex-5 and mex-6 during the first embryonic cell divisions. Plays a role in nicotinic acetylcholine receptor-mediated sensitivity to nicotine but not levamisole. Regulates motility. The sequence is that of Serine/threonine-protein kinase plk-2 from Caenorhabditis elegans.